The following is a 95-amino-acid chain: Co-chaperonin GroES (95 aa).

This sequence belongs to the GroES chaperonin family. As to quaternary structure, heptamer of 7 subunits arranged in a ring. Interacts with the chaperonin GroEL.

Its subcellular location is the cytoplasm. In terms of biological role, together with the chaperonin GroEL, plays an essential role in assisting protein folding. The GroEL-GroES system forms a nano-cage that allows encapsulation of the non-native substrate proteins and provides a physical environment optimized to promote and accelerate protein folding. GroES binds to the apical surface of the GroEL ring, thereby capping the opening of the GroEL channel. In Jannaschia sp. (strain CCS1), this protein is Co-chaperonin GroES.